Reading from the N-terminus, the 256-residue chain is uncharacterized protein (256 aa).

2 helical membrane-spanning segments follow: residues 155–175 (ITGMLAAYAVLQAVEGVGLWL) and 203–223 (ITTTRVVTFSINVAAVVYLLI).

The protein localises to the cell membrane. This is an uncharacterized protein from Mycobacterium bovis (strain ATCC BAA-935 / AF2122/97).